The primary structure comprises 333 residues: MEILNNLAERVISGEKLTKEEGLQILSIPDELVMDLVEEASKVRKYFFKNQMEFCSLINAKNGACTEDCSFCAQSSHYKTPINAYGLVSKDEMLAGAEKAVAINANRYCIVVSGRKASKEEVDKIADAIKEIKKTYPIKVCCSLGTVDEKDLDKLKVAGVDRINHNLETSEKYFSKIVSTHTWKERYKTIKKIQKVGLSTCTGGIFGMGESDEDIIDLAMTYRDLEVDSIPLNFLIPIPGTPLGDKHNLTPLRCLKIIALFRLFNPKSEIRLCGGRELNLKDYHDIAFEVANCLMAGGYLTRAGREPGKDEEMARRLGRELIKNGASFSVSNE.

One can recognise a Radical SAM core domain in the interval 47-276 (FFKNQMEFCS…KSEIRLCGGR (230 aa)). Residues Cys-65, Cys-69, and Cys-72 each coordinate [4Fe-4S] cluster. Positions 109, 141, 201, and 271 each coordinate [2Fe-2S] cluster.

The protein belongs to the radical SAM superfamily. Biotin synthase family. As to quaternary structure, homodimer. The cofactor is [4Fe-4S] cluster. [2Fe-2S] cluster is required as a cofactor.

It catalyses the reaction (4R,5S)-dethiobiotin + (sulfur carrier)-SH + 2 reduced [2Fe-2S]-[ferredoxin] + 2 S-adenosyl-L-methionine = (sulfur carrier)-H + biotin + 2 5'-deoxyadenosine + 2 L-methionine + 2 oxidized [2Fe-2S]-[ferredoxin]. It participates in cofactor biosynthesis; biotin biosynthesis; biotin from 7,8-diaminononanoate: step 2/2. In terms of biological role, catalyzes the conversion of dethiobiotin (DTB) to biotin by the insertion of a sulfur atom into dethiobiotin via a radical-based mechanism. The protein is Biotin synthase of Sulfurihydrogenibium sp. (strain YO3AOP1).